The following is a 191-amino-acid chain: Peptidyl-tRNA hydrolase (191 aa).

Position 14 (Tyr14) interacts with tRNA. The active-site Proton acceptor is the His19. TRNA contacts are provided by Tyr64, Asn66, and Asn112.

This sequence belongs to the PTH family. In terms of assembly, monomer.

It localises to the cytoplasm. It carries out the reaction an N-acyl-L-alpha-aminoacyl-tRNA + H2O = an N-acyl-L-amino acid + a tRNA + H(+). In terms of biological role, hydrolyzes ribosome-free peptidyl-tRNAs (with 1 or more amino acids incorporated), which drop off the ribosome during protein synthesis, or as a result of ribosome stalling. Functionally, catalyzes the release of premature peptidyl moieties from peptidyl-tRNA molecules trapped in stalled 50S ribosomal subunits, and thus maintains levels of free tRNAs and 50S ribosomes. The protein is Peptidyl-tRNA hydrolase of Clostridium botulinum (strain Eklund 17B / Type B).